Here is a 161-residue protein sequence, read N- to C-terminus: Large ribosomal subunit protein uL30m (161 aa).

The transit peptide at 1–34 directs the protein to the mitochondrion; that stretch reads MAGILRSIVQRPPGRLQTATKGVEPLVCVDWIRH.

Belongs to the universal ribosomal protein uL30 family. In terms of assembly, component of the mitochondrial ribosome large subunit (39S) which comprises a 16S rRNA and about 50 distinct proteins.

The protein resides in the mitochondrion. The sequence is that of Large ribosomal subunit protein uL30m (MRPL30) from Bos taurus (Bovine).